Reading from the N-terminus, the 203-residue chain is Dephospho-CoA kinase (203 aa).

In terms of domain architecture, DPCK spans 4-201; it reads IIGLTGGIGS…RKYLMLARKH (198 aa). ATP is bound at residue 12-17; that stretch reads GSGKTR.

Belongs to the CoaE family.

It is found in the cytoplasm. The catalysed reaction is 3'-dephospho-CoA + ATP = ADP + CoA + H(+). It functions in the pathway cofactor biosynthesis; coenzyme A biosynthesis; CoA from (R)-pantothenate: step 5/5. Its function is as follows. Catalyzes the phosphorylation of the 3'-hydroxyl group of dephosphocoenzyme A to form coenzyme A. The polypeptide is Dephospho-CoA kinase (Nitrosomonas europaea (strain ATCC 19718 / CIP 103999 / KCTC 2705 / NBRC 14298)).